Here is a 70-residue protein sequence, read N- to C-terminus: Small ribosomal subunit protein bS21 (70 aa).

Belongs to the bacterial ribosomal protein bS21 family.

This Campylobacter curvus (strain 525.92) protein is Small ribosomal subunit protein bS21.